We begin with the raw amino-acid sequence, 570 residues long: Proline--tRNA ligase (570 aa).

Belongs to the class-II aminoacyl-tRNA synthetase family. ProS type 1 subfamily. In terms of assembly, homodimer.

The protein resides in the cytoplasm. It carries out the reaction tRNA(Pro) + L-proline + ATP = L-prolyl-tRNA(Pro) + AMP + diphosphate. Catalyzes the attachment of proline to tRNA(Pro) in a two-step reaction: proline is first activated by ATP to form Pro-AMP and then transferred to the acceptor end of tRNA(Pro). As ProRS can inadvertently accommodate and process non-cognate amino acids such as alanine and cysteine, to avoid such errors it has two additional distinct editing activities against alanine. One activity is designated as 'pretransfer' editing and involves the tRNA(Pro)-independent hydrolysis of activated Ala-AMP. The other activity is designated 'posttransfer' editing and involves deacylation of mischarged Ala-tRNA(Pro). The misacylated Cys-tRNA(Pro) is not edited by ProRS. In Shewanella sp. (strain MR-4), this protein is Proline--tRNA ligase.